Reading from the N-terminus, the 1287-residue chain is SCL-interrupting locus protein (1287 aa).

Methionine 1 bears the N-acetylmethionine mark. An interaction with RBM14 region spans residues 1 to 1018 (MEPIYPFARP…IDSPTKVKKN (1018 aa)). An interaction with CPAP region spans residues 231 to 781 (YKYGYLTMDE…VSVEAQSSPG (551 aa)). Disordered stretches follow at residues 378-417 (RSSQKLSSGKMPIHDHDSGVEDEDFSPRPIPSPHPVSQKI) and 508-533 (PPAYKKGNPHTRNSIKPSSHNGPSHD). Serine 395 is subject to Phosphoserine. The span at 517-529 (HTRNSIKPSSHNG) shows a compositional bias: polar residues. The segment at 584–779 (PMELQIPTPP…ELVSVEAQSS (196 aa)) is PIN1-binding. Phosphoserine is present on residues serine 753, serine 779, and serine 1135.

In terms of assembly, homodimer. Interacts with PIN1 via its WW domain. This interaction is dependent on STIL mitotic phosphorylation. Interacts with CPAP. Interacts with RBM14 and this interaction interferes with the interaction of STIL with CPAP. Forms a complex with CPAP and SASS6. Interacts (via N-terminus) with CEP85; this interaction is essential for efficient centriolar targeting of STIL and subsequent PLK4 activation. Ubiquitinated. In terms of processing, phosphorylated following the activation of the mitotic checkpoint. As to expression, expressed in all hematopoietic tissues and cell lines. Highly expressed in a variety of tumors characterized by increased mitotic activity with highest expression in lung cancer.

It is found in the cytoplasm. Its subcellular location is the cytosol. It localises to the cytoskeleton. The protein resides in the microtubule organizing center. The protein localises to the centrosome. It is found in the centriole. Its subcellular location is the cell cortex. Functionally, immediate-early gene. Plays an important role in embryonic development as well as in cellular growth and proliferation; its long-term silencing affects cell survival and cell cycle distribution as well as decreases CDK1 activity correlated with reduced phosphorylation of CDK1. Plays a role as a positive regulator of the sonic hedgehog pathway, acting downstream of PTCH1. Plays an important role in the regulation of centriole duplication. Required for the onset of procentriole formation and proper mitotic progression. During procentriole formation, is essential for the correct loading of SASS6 and CPAP to the base of the procentriole to initiate procentriole assembly. In complex with STIL acts as a modulator of PLK4-driven cytoskeletal rearrangements and directional cell motility. This chain is SCL-interrupting locus protein (STIL), found in Homo sapiens (Human).